The following is a 364-amino-acid chain: Fructose-bisphosphate aldolase C (364 aa).

Phosphotyrosine is present on Y5. Residues S36, S39, and S45 each carry the phosphoserine modification. R56 serves as a coordination point for substrate. At K111 the chain carries N6-acetyllysine. S132 is modified (phosphoserine). K147 contacts substrate. Residue E188 is the Proton acceptor of the active site. K230 acts as the Schiff-base intermediate with dihydroxyacetone-P in catalysis.

Belongs to the class I fructose-bisphosphate aldolase family. In terms of assembly, homotetramer. Interacts with ATP6V1E1.

The catalysed reaction is beta-D-fructose 1,6-bisphosphate = D-glyceraldehyde 3-phosphate + dihydroxyacetone phosphate. The protein operates within carbohydrate degradation; glycolysis; D-glyceraldehyde 3-phosphate and glycerone phosphate from D-glucose: step 4/4. The sequence is that of Fructose-bisphosphate aldolase C (ALDOC) from Pan troglodytes (Chimpanzee).